A 361-amino-acid polypeptide reads, in one-letter code: Phosphoserine aminotransferase (361 aa).

An L-glutamate-binding site is contributed by Arg43. Pyridoxal 5'-phosphate is bound by residues 77-78 (AS), Trp103, Thr153, Asp173, and Gln196. At Lys197 the chain carries N6-(pyridoxal phosphate)lysine. Pyridoxal 5'-phosphate is bound at residue 238–239 (NT).

This sequence belongs to the class-V pyridoxal-phosphate-dependent aminotransferase family. SerC subfamily. Homodimer. Requires pyridoxal 5'-phosphate as cofactor.

Its subcellular location is the cytoplasm. It catalyses the reaction O-phospho-L-serine + 2-oxoglutarate = 3-phosphooxypyruvate + L-glutamate. The catalysed reaction is 4-(phosphooxy)-L-threonine + 2-oxoglutarate = (R)-3-hydroxy-2-oxo-4-phosphooxybutanoate + L-glutamate. It functions in the pathway amino-acid biosynthesis; L-serine biosynthesis; L-serine from 3-phospho-D-glycerate: step 2/3. It participates in cofactor biosynthesis; pyridoxine 5'-phosphate biosynthesis; pyridoxine 5'-phosphate from D-erythrose 4-phosphate: step 3/5. In terms of biological role, catalyzes the reversible conversion of 3-phosphohydroxypyruvate to phosphoserine and of 3-hydroxy-2-oxo-4-phosphonooxybutanoate to phosphohydroxythreonine. The chain is Phosphoserine aminotransferase from Stutzerimonas stutzeri (Pseudomonas stutzeri).